Here is a 434-residue protein sequence, read N- to C-terminus: Putative nuclease OPG089 (434 aa).

Mg(2+) contacts are provided by D33, D74, E168, D170, D196, and D198.

This sequence belongs to the XPG/RAD2 endonuclease family. FEN1 subfamily. Mg(2+) serves as cofactor.

Its subcellular location is the virion. Its function is as follows. Putative nuclease that seems to be required for double-strand break repair, homologous recombination, and production of full-length viral genomic DNA. The polypeptide is Putative nuclease OPG089 (OPG089) (Vaccinia virus (strain Copenhagen) (VACV)).